The following is a 138-amino-acid chain: Translation initiation factor 5A (138 aa).

Position 37 is a hypusine (K37).

This sequence belongs to the eIF-5A family.

It is found in the cytoplasm. Its function is as follows. Functions by promoting the formation of the first peptide bond. The chain is Translation initiation factor 5A from Pyrococcus furiosus (strain ATCC 43587 / DSM 3638 / JCM 8422 / Vc1).